We begin with the raw amino-acid sequence, 1118 residues long: cGMP-specific 3',5'-cyclic phosphodiesterase (1118 aa).

The segment at 1–142 is disordered; that stretch reads MTDVSSPAGG…KASTTASQQD (142 aa). The segment covering 18-33 has biased composition (low complexity); the sequence is STTSSSSAATTSASSS. Residues 34–45 show a composition bias toward polar residues; the sequence is KPLTNGANKTAI. Low complexity-rich tracts occupy residues 46 to 56 and 63 to 72; these read STAAGGVTPGA and GAIPASSSSG. Residues 84–101 show a composition bias toward polar residues; it reads SNNNRPAVTNRSSETKLM. The segment covering 102 to 128 has biased composition (low complexity); it reads TPTGSSSSPSQSPSQTQASIQTQTSQQ. 2 consecutive GAF domains span residues 247–399 and 431–612; these read DIDV…GIGI and NLEC…GLGI. The region spanning 642–965 is the PDEase domain; the sequence is SQDQTEKLTQ…RNWQDLAEKV (324 aa). H718 acts as the Proton donor in catalysis. Positions 722, 758, 759, and 869 each coordinate a divalent metal cation. Disordered stretches follow at residues 1006–1035 and 1065–1118; these read QQSQHGSEDSHTPEHQRSGSRLSMKKTGAL and SHVS…CALL. Composition is skewed to basic and acidic residues over residues 1011-1022 and 1065-1075; these read GSEDSHTPEHQR and SHVSEDMDDKS. Over residues 1084 to 1104 the composition is skewed to low complexity; it reads ASGSMGRMSASSSTSSAGGQM. Basic residues predominate over residues 1108–1118; sequence SKKRSKLCALL. C1115 is subject to Cysteine methyl ester. Residue C1115 is the site of S-farnesyl cysteine attachment. A propeptide spans 1116-1118 (removed in mature form); it reads ALL.

The protein belongs to the cyclic nucleotide phosphodiesterase family. As to quaternary structure, interacts with PrBP. It depends on a divalent metal cation as a cofactor. As to expression, expressed in Malpighian tubule principal cells. Also expressed in adult head.

Its subcellular location is the cell membrane. The catalysed reaction is 3',5'-cyclic GMP + H2O = GMP + H(+). Its activity is regulated as follows. Inhibited by sildenafil and zaprinast. In terms of biological role, hydrolyzes the second messenger cGMP, which is a key regulator of many important physiological processes. Has cAMP phosphodiesterase activity in vitro but not in vivo. Has a role regulating cGMP transport in Malpighian tubule principal cells. This is cGMP-specific 3',5'-cyclic phosphodiesterase (Pde6) from Drosophila melanogaster (Fruit fly).